A 249-amino-acid polypeptide reads, in one-letter code: Proteasome subunit alpha (249 aa).

Residues 229-249 are disordered; sequence EAREAEEAAEAQSSEDGGATD.

Belongs to the peptidase T1A family. In terms of assembly, the 20S proteasome core is composed of 14 alpha and 14 beta subunits that assemble into four stacked heptameric rings, resulting in a barrel-shaped structure. The two inner rings, each composed of seven catalytic beta subunits, are sandwiched by two outer rings, each composed of seven alpha subunits. The catalytic chamber with the active sites is on the inside of the barrel. Has a gated structure, the ends of the cylinder being occluded by the N-termini of the alpha-subunits. Is capped by the proteasome-associated ATPase, ARC.

It localises to the cytoplasm. The protein operates within protein degradation; proteasomal Pup-dependent pathway. The formation of the proteasomal ATPase ARC-20S proteasome complex, likely via the docking of the C-termini of ARC into the intersubunit pockets in the alpha-rings, may trigger opening of the gate for substrate entry. Interconversion between the open-gate and close-gate conformations leads to a dynamic regulation of the 20S proteasome proteolysis activity. Functionally, component of the proteasome core, a large protease complex with broad specificity involved in protein degradation. This chain is Proteasome subunit alpha, found in Thermobifida fusca (strain YX).